A 373-amino-acid polypeptide reads, in one-letter code: Chloroperoxidase (373 aa).

The first 20 residues, 1 to 20, serve as a signal peptide directing secretion; sequence MFSKVLPFVGAVAALPHSVR. Gln-21 carries the pyrrolidone carboxylic acid modification. A glycan (N-linked (GlcNAc...) asparagine) is linked at Asn-33. Position 50 (Cys-50) interacts with heme. The cysteines at positions 100 and 108 are disulfide-linked. N-linked (GlcNAc...) asparagine glycosylation occurs at Asn-114. Positions 125, 126, and 129 each coordinate Mn(2+). The active site involves Glu-204. The N-linked (GlcNAc...) asparagine glycan is linked to Asn-237. Thr-259 carries O-linked (Man) threonine glycosylation. 4 O-linked (Man) serine glycosylation sites follow: Ser-260, Ser-262, Ser-263, and Ser-269. O-linked (Man) threonine glycosylation occurs at Thr-271. An O-linked (Man) serine glycan is attached at Ser-272. O-linked (Man) threonine glycosylation is present at Thr-273. Residues Thr-296, Thr-304, and Thr-314 are each glycosylated (O-linked (Man...) threonine). Positions 322-373 are excised as a propeptide; the sequence is EAAPAATTSMAVFKNPYLEAIGTQDIKNQQAYVSSKAAAMASAMAANKARNL.

It belongs to the chloroperoxidase family. The cofactor is heme b. It depends on Mn(2+) as a cofactor. In terms of processing, N- and O-glycosylated.

It catalyses the reaction RH + Cl(-) + H2O2 = RCl + 2 H2O.. Functionally, catalyzes peroxidative halogenations involved in the biosynthesis of clardariomycin (2,2-dichloro-1,3-cyclo-pentenedione). The enzyme also has potent catalase activity and in the absence of halide ion, acts as a peroxidase similar to plant peroxidases. This Leptoxyphium fumago (Caldariomyces fumago) protein is Chloroperoxidase (CPO).